A 1394-amino-acid polypeptide reads, in one-letter code: Kinesin-like protein KIF27 (1394 aa).

In terms of domain architecture, Kinesin motor spans 5–341; it reads PIKVAVRIRP…LKYANRARNI (337 aa). Position 84–91 (84–91) interacts with ATP; that stretch reads GQTGSGKT. 2 coiled-coil regions span residues 352–418 and 493–554; these read QADR…IEQA and QVVF…ELAK. Disordered stretches follow at residues 551 to 583 and 642 to 664; these read ELAK…PHTA and FSDN…SRSH. Residues 555–565 show a composition bias toward polar residues; that stretch reads RSSSMPTSTKE. The span at 571-580 shows a compositional bias: basic and acidic residues; that stretch reads PDARAPEKRP. Residues Ser643, Ser646, Ser672, Ser675, and Ser704 each carry the phosphoserine modification. Positions 709–980 form a coiled coil; the sequence is LQKLRTSELI…NKKLRSSQAL (272 aa). The residue at position 999 (Ser999) is a Phosphoserine. Coiled coils occupy residues 1010-1078, 1118-1152, and 1187-1226; these read TEEK…SIQN, NKVI…HELE, and QDGE…RLKD. The span at 1267-1280 shows a compositional bias: basic and acidic residues; that stretch reads TENTKLNGREKEVD. Positions 1267–1340 are disordered; the sequence is TENTKLNGRE…SQSPPPPQLQ (74 aa). 2 stretches are compositionally biased toward polar residues: residues 1281-1295 and 1310-1320; these read NSSS…TQQI and APSSGQLQSSA. Phosphoserine occurs at positions 1365 and 1387. Residues 1375–1394 are disordered; that stretch reads SLGAGVRSVTADSLEEPEES.

This sequence belongs to the TRAFAC class myosin-kinesin ATPase superfamily. Kinesin family. KIF27 subfamily. Interacts with STK36.

It localises to the cytoplasm. The protein resides in the cytoskeleton. It is found in the cell projection. The protein localises to the cilium. Its function is as follows. Plays an essential role in motile ciliogenesis. The sequence is that of Kinesin-like protein KIF27 (Kif27) from Rattus norvegicus (Rat).